Reading from the N-terminus, the 566-residue chain is Medium-chain fatty-acid--CoA ligase (566 aa).

231 to 242 (ILASERAYCARL) is a binding site for ATP.

This sequence belongs to the ATP-dependent AMP-binding enzyme family. Homodimer. Requires Mg(2+) as cofactor.

The protein resides in the cell membrane. The catalysed reaction is hexanoate + ATP + CoA = hexanoyl-CoA + AMP + diphosphate. It carries out the reaction octanoate + ATP + CoA = octanoyl-CoA + AMP + diphosphate. It catalyses the reaction dodecanoate + ATP + CoA = dodecanoyl-CoA + AMP + diphosphate. Its pathway is lipid metabolism; fatty acid beta-oxidation. Catalyzes the esterification, concomitant with transport, of exogenous fatty acids into metabolically active CoA thioesters for subsequent degradation or incorporation into phospholipids. Is maximally active on C6:0, C8:0 and C12:0 fatty acids, while has a low activity on C14-C18 chain length fatty acids. Is involved in the anaerobic beta-oxidative degradation of fatty acids, which allows anaerobic growth of E.coli on fatty acids as a sole carbon and energy source in the presence of nitrate or fumarate as a terminal electron acceptor. Can functionally replace FadD under anaerobic conditions. The polypeptide is Medium-chain fatty-acid--CoA ligase (Escherichia coli (strain K12)).